The chain runs to 980 residues: Probable outer membrane protein PmpH (980 aa).

An N-terminal signal peptide occupies residues 1 to 24 (MPFSLRSTSFCFLACLCSYSYGLA). Residues 661-980 (GELVPNSLWV…FVSLGLNRIF (320 aa)) form the Autotransporter domain.

This sequence belongs to the PMP outer membrane protein family.

It localises to the secreted. The protein localises to the cell wall. The protein resides in the cell outer membrane. The polypeptide is Probable outer membrane protein PmpH (pmpH) (Chlamydia muridarum (strain MoPn / Nigg)).